A 1368-amino-acid polypeptide reads, in one-letter code: MARQMTSSQFHKSKTLDNKYMLGDEIGKGAYGRVYKGLDLENGDFVAIKQVSLENIVQEDLNTIMQEIDLLKNLNHKNIVKYLGSSKTKTHLHIILEYVENGSLANIIKPNKFGPFPESLVAVYIAQVLEGLVYLHEQGVIHRDIKGANILTTKEGLVKLADFGVATKLNEADVNTHSVVGTPYWMAPEVIEMSGVCAASDIWSVGCTVIELLTCVPPYYDLQPMPALFRIVQDDNPPIPDSLSPDITDFLRQCFKKDSRQRPDAKTLLSHPWIRNSRRALQSSLRHSGTIKYMKEATASSEKDDEGSQDAAESLSGENVGISKTDSKSKLPLVGVSSFRSEKDQSTPSDLGEEGTDNSEDDIMSDQVPTLSIHEKSSDAKGTPQDVSDFHGKSERGETPENLVTETSEARKNTSAIKHVGKELSIPVDQTSHSFGRKGEERGIRKAVKTPSSVSGNELARFSDPPGDASLHDLFHPLDKVSEGKPNEASTSMPTSNVNQGDSPVADGGKNDLATKLRATIAQKQMEGETGHSNDGGDLFRLMMGVLKDDVIDIDGLVFDEKVPAENLFPLQAVEFSRLVSSLRPDESEDAIVSSCQKLVAMFRQRPEQKVVFVTQHGFLPLMDLLDIPKSRVICAVLQLINEIIKDNTDFQENACLVGLIPVVMSFAGPERDRSREIRKEAAYFLQQLCQSSPLTLQMFIACRGIPVLVGFLEADYAKYREMVHLAIDGMWQVFKLKRSTPRNDFCRIAAKNGILLRLINTLYSLNEATRLASISGGLDGQAPRVRSGQLDPNNPIFGQNETSSLSMIDQPDVLKTRHGGGEEPSHASTSNSQRSDVHQPDALHPDGDKPRVSSVAPDASTSGTEDVRQQHRISLSANRTSTDKLQKLAEGASNGFPVTQTEQVRPLLSLLDKEPPSRHYSGQLDYVKHITGIERHESRLPLLHGSNEKKNNGDLDFLMAEFAEVSGRGKENGSLDTTTRYPSKTMTKKVLAIEGVASTSGIASQTASGVLSGSGVLNARPGSATSSGLLAHMVSTLSADVAREYLEKVADLLLEFARADTTVKSYMCSQSLLSRLFQMFNRVEPPILLKILECTNHLSTDPNCLENLQRADAIKHLIPNLELKDGHLVYQIHHEVLSALFNLCKINKRRQEQAAENGIIPHLMLFIMSDSPLKQYALPLLCDMAHASRNSREQLRAHGGLDVYLSLLDDEYWSVIALDSIAVCLAQDNDNRKVEQALLKQDAIQKLVDFFQSCPERHFVHILEPFLKIITKSYRINKTLAVNGLTPLLISRLDHQDAIARLNLLKLIKAVYEHHPRPKQLIVENDLPQKLQNLIEERRDGQRSGGQVLVKQMATSLLKALHINTIL.

Positions 20-274 (YMLGDEIGKG…AKTLLSHPWI (255 aa)) constitute a Protein kinase domain. 2 HEAT repeats span residues 25 to 62 (EIGK…EDLN) and 86 to 125 (SKTK…AVYI). ATP is bound by residues 26-34 (IGKGAYGRV) and lysine 49. Aspartate 144 acts as the Proton acceptor in catalysis. The HEAT 3 repeat unit spans residues 218-256 (PYYDLQPMPALFRIVQDDNPPIPDSLSPDITDFLRQCFK). Disordered regions lie at residues 296 to 415 (EATA…KNTS) and 430 to 507 (QTSH…PVAD). The segment covering 351–364 (LGEEGTDNSEDDIM) has biased composition (acidic residues). 2 stretches are compositionally biased toward basic and acidic residues: residues 388-399 (SDFHGKSERGET) and 470-486 (SLHD…EGKP). Over residues 488–502 (EASTSMPTSNVNQGD) the composition is skewed to polar residues. HEAT repeat units follow at residues 533-571 (SNDG…LFPL), 628-653 (IPKS…DFQE), 654-695 (NACL…SSPL), 699-737 (MFIA…VFKL), and 750-788 (AAKN…RVRS). A disordered region spans residues 777 to 883 (GGLDGQAPRV…ISLSANRTST (107 aa)). The span at 791–808 (LDPNNPIFGQNETSSLSM) shows a compositional bias: polar residues. Composition is skewed to basic and acidic residues over residues 813–826 (DVLK…EEPS) and 836–852 (SDVH…DKPR). 9 HEAT repeats span residues 903 to 940 (EQVR…HESR), 1025 to 1063 (ATSS…ADTT), 1067 to 1105 (YMCS…DPNC), 1112 to 1150 (ADAI…INKR), 1154 to 1191 (QAAE…ASRN), 1196 to 1234 (LRAH…DNRK), 1258 to 1281 (RHFV…NKTL), 1282 to 1318 (AVNG…HHPR), and 1348 to 1368 (QVLV…NTIL).

It belongs to the protein kinase superfamily. Ser/Thr protein kinase family. As to quaternary structure, interacts with SGP1. Post-translationally, autophosphorylated. As to expression, expressed in both the sporophytic and the gametophytic tissues, especially in dividing cells. Mostly present in flower buds and mature flowers. Also accumulates in embryos, in roots apices, trichomes and ovule integuments.

It localises to the cytoplasm. Its subcellular location is the cytoskeleton. It is found in the microtubule organizing center. The protein localises to the nucleus. The protein resides in the nucleolus. It localises to the cell membrane. It carries out the reaction L-seryl-[protein] + ATP = O-phospho-L-seryl-[protein] + ADP + H(+). The enzyme catalyses L-threonyl-[protein] + ATP = O-phospho-L-threonyl-[protein] + ADP + H(+). Its function is as follows. Serine/threonine-protein kinase involved in the spatial and temporal control system organizing cortical activities in mitotic and postmitotic cells. Required for the normal functioning of the plasma membrane in developing pollen. Involved in the regulation of cell expansion, cell elongation, and embryo development. In Arabidopsis thaliana (Mouse-ear cress), this protein is MAP3K epsilon protein kinase 1.